The chain runs to 463 residues: Kynurenine 3-monooxygenase (463 aa).

Belongs to the aromatic-ring hydroxylase family. KMO subfamily. It depends on FAD as a cofactor.

The protein localises to the mitochondrion outer membrane. It catalyses the reaction L-kynurenine + NADPH + O2 + H(+) = 3-hydroxy-L-kynurenine + NADP(+) + H2O. It functions in the pathway cofactor biosynthesis; NAD(+) biosynthesis; quinolinate from L-kynurenine: step 1/3. Its function is as follows. Catalyzes the hydroxylation of L-kynurenine (L-Kyn) to form 3-hydroxy-L-kynurenine (L-3OHKyn). Required for synthesis of quinolinic acid. The sequence is that of Kynurenine 3-monooxygenase from Yarrowia lipolytica (strain CLIB 122 / E 150) (Yeast).